Here is an 805-residue protein sequence, read N- to C-terminus: MVFSHRNVEKKWQQYWEQNKTFKTSEDEGKKKFYALDMFPYPSGAGLHVGHPEGYTATDILSRMKRMQGYNVLHPMGWDAFGLPAEQYALDTGNDPAEFTEHNINTFRRQIKSLGFSYDWDREINTTDPHYYKWTQWIFTKLYEHGLAYIDEVAVNWCPALGTVLANEEVIDGKSERGGHPVERRPMKQWVLKITAYAERLLADLDELDWPESIKEMQRNWIGRSEGAEVTFGIEGHDESFTVFTTRPDTLYGATYAVLAPEHKLVEQITVPAQKEAVEAYLDQAKRKSDLERTDLAKEKTGVFTGAYAINPVNGERLPIWIADYVLISYGTGSIMAVPAHDERDYEFAKTFDLPIKQVIAGGDISKEAYAGDGEHINSGMLDGLNKEQAISKMIEWLEAEGKGNRKVTYRLRDWLFSRQRYWGEPIPILHLEDGTMKVVPESELPIMLPKTKEIKPSGTGESPLANIAEWVNTIDPETGMKARRETNTMPQWAGSCWYFLRFIDPHNDKALADPDKLKEWLPIDIYIGGAEHAVLHLLYSRFWHKFLYDIGVVPTKEPFQKLFNQGMILGENNEKMSKSKGNVVNPDDIIDSHGADTLRMYEMFMGPLDASIAWSTKGLDGARRFLDRVYRLFVGDNGELNEKIVETSNVAGMERVYHQTVKKVTEDYEGLRFNTGISQLMVFVNEAYKAEVLPKKFMEDFVKMLSPIAPHLGEELWEKLGHSESVAYAAWPTYDEAKLVEDEVEIVLQINGKNKEKLLIASDSTKEQMEEMAKNNEMINELIEGKTIVKVIAVPGKLVNIVVR.

Residues 40–51 (PYPSGAGLHVGH) carry the 'HIGH' region motif. The 'KMSKS' region motif lies at 576 to 580 (KMSKS). K579 serves as a coordination point for ATP.

This sequence belongs to the class-I aminoacyl-tRNA synthetase family.

It localises to the cytoplasm. The catalysed reaction is tRNA(Leu) + L-leucine + ATP = L-leucyl-tRNA(Leu) + AMP + diphosphate. The chain is Leucine--tRNA ligase from Brevibacillus brevis (strain 47 / JCM 6285 / NBRC 100599).